The primary structure comprises 235 residues: 2-C-methyl-D-erythritol 4-phosphate cytidylyltransferase (235 aa).

Belongs to the IspD/TarI cytidylyltransferase family. IspD subfamily.

The catalysed reaction is 2-C-methyl-D-erythritol 4-phosphate + CTP + H(+) = 4-CDP-2-C-methyl-D-erythritol + diphosphate. It functions in the pathway isoprenoid biosynthesis; isopentenyl diphosphate biosynthesis via DXP pathway; isopentenyl diphosphate from 1-deoxy-D-xylulose 5-phosphate: step 2/6. Its function is as follows. Catalyzes the formation of 4-diphosphocytidyl-2-C-methyl-D-erythritol from CTP and 2-C-methyl-D-erythritol 4-phosphate (MEP). This is 2-C-methyl-D-erythritol 4-phosphate cytidylyltransferase from Synechococcus sp. (strain JA-3-3Ab) (Cyanobacteria bacterium Yellowstone A-Prime).